A 160-amino-acid polypeptide reads, in one-letter code: Nucleotide-binding protein VC_1508 (160 aa).

It belongs to the YajQ family.

Functionally, nucleotide-binding protein. The polypeptide is Nucleotide-binding protein VC_1508 (Vibrio cholerae serotype O1 (strain ATCC 39315 / El Tor Inaba N16961)).